We begin with the raw amino-acid sequence, 204 residues long: Rho GDP-dissociation inhibitor 1 (204 aa).

The disordered stretch occupies residues 1-36; the sequence is MAEQEPTAEQLAQIAAENEEDEHSVNYKPPAQKSIQ. The residue at position 2 (alanine 2) is an N-acetylalanine. Phosphoserine is present on serine 34. An N6-acetyllysine modification is found at lysine 43. Serine 47 carries the post-translational modification Phosphoserine. An N6-acetyllysine mark is found at lysine 105 and lysine 127. Glycyl lysine isopeptide (Lys-Gly) (interchain with G-Cter in SUMO1); alternate cross-links involve residues lysine 138 and lysine 141. Glycyl lysine isopeptide (Lys-Gly) (interchain with G-Cter in SUMO2); alternate cross-links involve residues lysine 138 and lysine 141. The residue at position 141 (lysine 141) is an N6-acetyllysine; alternate. Lysine 141 carries the N6-succinyllysine; alternate modification. Residue lysine 178 is modified to N6-acetyllysine.

Belongs to the Rho GDI family. In terms of assembly, monomer. Interacts with FER. Interacts with PLXNB3. Forms a heterodimer with RAC1. Interacts with RHOA, the affinity is increased by three orders of magnitude when RHOA is prenylated. Interacts with PSMD10; the interaction increases ARHGDIA association with RHOA, leading to ARHGDIA-mediated inactivation of RHOA and ROCK and prolonged AKT activation. Interacts with KANK2; the interaction is direct and may regulate the interaction of ARHGDIA with RHOA, RAC1 and CDC42. Interacts with RHOC. Interacts with CDC42. Interacts with NGFR (via death domain); NGFR binding decreases the affinity for RHOA. As to expression, in kidney glomerulus, expressed in podocytes and mesangial cells.

Its subcellular location is the cytoplasm. In terms of biological role, controls Rho proteins homeostasis. Regulates the GDP/GTP exchange reaction of the Rho proteins by inhibiting the dissociation of GDP from them, and the subsequent binding of GTP to them. Retains Rho proteins such as CDC42, RAC1 and RHOA in an inactive cytosolic pool, regulating their stability and protecting them from degradation. Actively involved in the recycling and distribution of activated Rho GTPases in the cell, mediates extraction from membranes of both inactive and activated molecules due its exceptionally high affinity for prenylated forms. Through the modulation of Rho proteins, may play a role in cell motility regulation. In glioma cells, inhibits cell migration and invasion by mediating the signals of SEMA5A and PLXNB3 that lead to inactivation of RAC1. In Mus musculus (Mouse), this protein is Rho GDP-dissociation inhibitor 1 (Arhgdia).